The following is a 451-amino-acid chain: UDP-N-acetylmuramoylalanine--D-glutamate ligase (451 aa).

120 to 126 (GSNGKTT) serves as a coordination point for ATP.

Belongs to the MurCDEF family.

It localises to the cytoplasm. It catalyses the reaction UDP-N-acetyl-alpha-D-muramoyl-L-alanine + D-glutamate + ATP = UDP-N-acetyl-alpha-D-muramoyl-L-alanyl-D-glutamate + ADP + phosphate + H(+). Its pathway is cell wall biogenesis; peptidoglycan biosynthesis. Cell wall formation. Catalyzes the addition of glutamate to the nucleotide precursor UDP-N-acetylmuramoyl-L-alanine (UMA). In Bacillus velezensis (strain DSM 23117 / BGSC 10A6 / LMG 26770 / FZB42) (Bacillus amyloliquefaciens subsp. plantarum), this protein is UDP-N-acetylmuramoylalanine--D-glutamate ligase.